A 562-amino-acid chain; its full sequence is NAD-dependent malic enzyme (562 aa).

Catalysis depends on Y101, which acts as the Proton donor. Residue R154 participates in NAD(+) binding. Catalysis depends on K172, which acts as the Proton acceptor. The a divalent metal cation site is built by E243, D244, and D267. D267 and N415 together coordinate NAD(+).

It belongs to the malic enzymes family. Homotetramer. Mg(2+) serves as cofactor. The cofactor is Mn(2+).

The enzyme catalyses (S)-malate + NAD(+) = pyruvate + CO2 + NADH. The catalysed reaction is oxaloacetate + H(+) = pyruvate + CO2. This is NAD-dependent malic enzyme from Shewanella loihica (strain ATCC BAA-1088 / PV-4).